The following is a 957-amino-acid chain: Glycine dehydrogenase (decarboxylating) (957 aa).

Lys708 bears the N6-(pyridoxal phosphate)lysine mark.

The protein belongs to the GcvP family. The glycine cleavage system is composed of four proteins: P, T, L and H. Requires pyridoxal 5'-phosphate as cofactor.

The enzyme catalyses N(6)-[(R)-lipoyl]-L-lysyl-[glycine-cleavage complex H protein] + glycine + H(+) = N(6)-[(R)-S(8)-aminomethyldihydrolipoyl]-L-lysyl-[glycine-cleavage complex H protein] + CO2. Its function is as follows. The glycine cleavage system catalyzes the degradation of glycine. The P protein binds the alpha-amino group of glycine through its pyridoxal phosphate cofactor; CO(2) is released and the remaining methylamine moiety is then transferred to the lipoamide cofactor of the H protein. This is Glycine dehydrogenase (decarboxylating) from Enterobacter sp. (strain 638).